The primary structure comprises 961 residues: Lon protease homolog, mitochondrial (961 aa).

The N-terminal 67 residues, Met-1–Gly-67, are a transit peptide targeting the mitochondrion. Disordered stretches follow at residues Gly-76–Gly-103 and Gln-220–Gly-262. The Lon N-terminal domain maps to Leu-125–Phe-371. Residues Lys-235–Lys-244 are compositionally biased toward basic residues. Basic and acidic residues predominate over residues Lys-245–Leu-257. Gly-524–Thr-531 is an ATP binding site. Residues Val-760–Glu-951 form the Lon proteolytic domain. Positions Ser-784–Ser-801 are enriched in basic and acidic residues. The interval Ser-784–Glu-803 is disordered. Active-site residues include Ser-857 and Lys-900.

The protein belongs to the peptidase S16 family. In terms of assembly, homohexamer. Organized in a ring with a central cavity. The ATP-binding and proteolytic domains (AP-domain) form a hexameric chamber, while the N-terminal domain is arranged as a trimer of dimers. DNA and RNA binding is stimulated by substrate and inhibited by ATP binding. Interacts with TWNK and mitochondrial DNA polymerase subunit POLG.

It is found in the mitochondrion matrix. The catalysed reaction is Hydrolysis of proteins in presence of ATP.. Functionally, ATP-dependent serine protease that mediates the selective degradation of misfolded, unassembled or oxidatively damaged polypeptides as well as certain short-lived regulatory proteins in the mitochondrial matrix. Endogenous substrates include mitochondrial steroidogenic acute regulatory (StAR) protein, DELE1, helicase Twinkle (TWNK) and the large ribosomal subunit protein MRPL32/bL32m. MRPL32/bL32m is protected from degradation by LONP1 when it is bound to a nucleic acid (RNA), but TWNK is not. May also have a chaperone function in the assembly of inner membrane protein complexes. Participates in the regulation of mitochondrial gene expression and in the maintenance of the integrity of the mitochondrial genome. Binds to mitochondrial promoters and RNA in a single-stranded, site-specific, and strand-specific manner. May regulate mitochondrial DNA replication and/or gene expression using site-specific, single-stranded DNA binding to target the degradation of regulatory proteins binding to adjacent sites in mitochondrial promoters. This is Lon protease homolog, mitochondrial from Bos taurus (Bovine).